A 147-amino-acid chain; its full sequence is Ribosome maturation factor RimP (147 aa).

The protein belongs to the RimP family.

It is found in the cytoplasm. Its function is as follows. Required for maturation of 30S ribosomal subunits. This Thermosipho melanesiensis (strain DSM 12029 / CIP 104789 / BI429) protein is Ribosome maturation factor RimP.